The chain runs to 424 residues: Histidine--tRNA ligase (424 aa).

It belongs to the class-II aminoacyl-tRNA synthetase family. Homodimer.

It is found in the cytoplasm. The catalysed reaction is tRNA(His) + L-histidine + ATP = L-histidyl-tRNA(His) + AMP + diphosphate + H(+). This is Histidine--tRNA ligase from Salmonella heidelberg (strain SL476).